A 404-amino-acid polypeptide reads, in one-letter code: Cysteine desulfurase IscS (404 aa).

Pyridoxal 5'-phosphate is bound by residues 75–76 (AT), N155, Q183, and 203–205 (SGH). K206 bears the N6-(pyridoxal phosphate)lysine mark. T243 lines the pyridoxal 5'-phosphate pocket. C328 acts as the Cysteine persulfide intermediate in catalysis. C328 is a binding site for [2Fe-2S] cluster.

The protein belongs to the class-V pyridoxal-phosphate-dependent aminotransferase family. NifS/IscS subfamily. In terms of assembly, homodimer. Forms a heterotetramer with IscU, interacts with other sulfur acceptors. Pyridoxal 5'-phosphate serves as cofactor.

The protein resides in the cytoplasm. It catalyses the reaction (sulfur carrier)-H + L-cysteine = (sulfur carrier)-SH + L-alanine. The protein operates within cofactor biosynthesis; iron-sulfur cluster biosynthesis. In terms of biological role, master enzyme that delivers sulfur to a number of partners involved in Fe-S cluster assembly, tRNA modification or cofactor biosynthesis. Catalyzes the removal of elemental sulfur atoms from cysteine to produce alanine. Functions as a sulfur delivery protein for Fe-S cluster synthesis onto IscU, an Fe-S scaffold assembly protein, as well as other S acceptor proteins. In Edwardsiella ictaluri (strain 93-146), this protein is Cysteine desulfurase IscS.